A 605-amino-acid polypeptide reads, in one-letter code: Protein ZRG17 (605 aa).

Residues 1–225 (METPQMNAIQ…DLLSNLPWPK (225 aa)) are Cytoplasmic-facing. Phosphoserine is present on residues S16 and S131. The interval 118-178 (PAPKLVPPPP…PSSAASRTSF (61 aa)) is disordered. Polar residues predominate over residues 143–176 (SKRSSMTLDSPFNFTTSTLQPHQQTPPSSAASRT). A helical membrane pass occupies residues 226 to 246 (AYIQLSIAALQIFACLITFQV). Residues 247 to 254 (GHLYSWSN) are Lumenal-facing. The helical transmembrane segment at 255–275 (FITLSHFITYDIIGSLVIIFV) threads the bilayer. Residues 276-287 (ENLSQFQVWFTG) lie on the Cytoplasmic side of the membrane. The chain crosses the membrane as a helical span at residues 288–308 (TITFPFGLNRIDVLLSFALAV). A topological domain (lumenal) is located at residue S309. Residues 310-330 (LCFVGLDLLFHIIEEFIVLFV) form a helical membrane-spanning segment. Residues 331-363 (ESGSSLTNNHDHDEINEQIPHSHIANANDSQNE) lie on the Cytoplasmic side of the membrane. A helical transmembrane segment spans residues 364–384 (NITLWYSILMINLVLSTLSLY). Topologically, residues 385-399 (KTFYANKYSNLKTKN) are lumenal. The chain crosses the membrane as a helical span at residues 400–420 (PIITITYTAYLFIYPLLLDLL). Over 421–422 (SS) the chain is Cytoplasmic. A helical membrane pass occupies residues 423 to 443 (ISDYLATLVISSLILWHGLTI). The Lumenal portion of the chain corresponds to 444-545 (ARWTSTVLLM…ERLSEFKSRY (102 aa)). Polar residues predominate over residues 473-482 (DTTAHTQQVE). The tract at residues 473-497 (DTTAHTQQVESKAAKEKPSVRPRSM) is disordered. Position 498 is a phosphoserine (S498). The helical transmembrane segment at 546–566 (ILNYDDIVISKVNFTLYVVLI) threads the bilayer. Residues 567–605 (KITMKGGSDDDELMLRLAIDKCIQTSIPTCETTIDIDRI) are Cytoplasmic-facing.

It localises to the endoplasmic reticulum membrane. This chain is Protein ZRG17 (ZRG17), found in Saccharomyces cerevisiae (strain ATCC 204508 / S288c) (Baker's yeast).